A 612-amino-acid chain; its full sequence is Phosphomethylpyrimidine synthase (612 aa).

Disordered regions lie at residues 1–33 (MTIK…TEAG) and 105–146 (AGRP…RDGN). The span at 12 to 24 (TQNTAQADTAENT) shows a compositional bias: low complexity. Positions 105–117 (AGRPVRPEDDGIK) are enriched in basic and acidic residues. Substrate contacts are provided by residues Asn-213, Met-242, Tyr-271, His-307, 327–329 (SRG), 368–371 (DGLR), and Glu-407. A Zn(2+)-binding site is contributed by His-411. Tyr-434 contributes to the substrate binding site. Residue His-475 coordinates Zn(2+). Positions 555, 558, and 563 each coordinate [4Fe-4S] cluster.

Belongs to the ThiC family. It depends on [4Fe-4S] cluster as a cofactor.

It catalyses the reaction 5-amino-1-(5-phospho-beta-D-ribosyl)imidazole + S-adenosyl-L-methionine = 4-amino-2-methyl-5-(phosphooxymethyl)pyrimidine + CO + 5'-deoxyadenosine + formate + L-methionine + 3 H(+). The protein operates within cofactor biosynthesis; thiamine diphosphate biosynthesis. Functionally, catalyzes the synthesis of the hydroxymethylpyrimidine phosphate (HMP-P) moiety of thiamine from aminoimidazole ribotide (AIR) in a radical S-adenosyl-L-methionine (SAM)-dependent reaction. This Streptomyces coelicolor (strain ATCC BAA-471 / A3(2) / M145) protein is Phosphomethylpyrimidine synthase.